A 224-amino-acid polypeptide reads, in one-letter code: MGYSKNIASGMFAMLLLASAVLSSNPHPLQDFCVADLDGKAVSVNGHMCKPMSEAGDDFLFSSKLAKAGNTSTPNGSAVTDLNVAEWPGTNTLGVSMNRVDFAPGGTNPPHIHPRATEIGIVMKGELLVGILGSLDSGNKLYSRVVRAGETFLIPRGLMHFQFNVGKTEASMVVFFNSQSPSVVFVPLTLFGSNPPIPKPVLTKALRVEAGVVELLKSKFAGGS.

An N-terminal signal peptide occupies residues 1-23 (MGYSKNIASGMFAMLLLASAVLS). C33 and C49 are disulfide-bonded. One can recognise a Cupin type-1 domain in the interval 63 to 214 (SKLAKAGNTS…ALRVEAGVVE (152 aa)). N70 and N75 each carry an N-linked (GlcNAc...) asparagine glycan. The Mn(2+) site is built by H111, H113, E118, and H160.

The protein belongs to the germin family. Oligomer (believed to be a pentamer but probably hexamer).

Its subcellular location is the secreted. It is found in the extracellular space. The protein localises to the apoplast. The protein resides in the cytoplasm. It localises to the cell wall. The enzyme catalyses oxalate + O2 + 2 H(+) = H2O2 + 2 CO2. Its function is as follows. Produces developmental and stress-related release of hydrogen peroxide in the apoplast. May play an important role in several aspects of plant growth and defense mechanisms. The sequence is that of Oxalate oxidase GF-3.8 from Triticum aestivum (Wheat).